The chain runs to 571 residues: Phosphoribosylaminoimidazole carboxylase (571 aa).

Ser-37 is modified (phosphoserine). Positions 110–298 (KEHLIKNGIA…QFEAHLRSIL (189 aa)) constitute an ATP-grasp domain. Residue 138-193 (GRDLGFPFVLKSRTLAYDGRGNFVVKNKEMIPEALEVLKDRPLYAEKWAPFTKELA) participates in ATP binding.

It in the C-terminal section; belongs to the AIR carboxylase family. Class I subfamily.

The enzyme catalyses 5-amino-1-(5-phospho-D-ribosyl)imidazole-4-carboxylate + H(+) = 5-amino-1-(5-phospho-beta-D-ribosyl)imidazole + CO2. Its pathway is purine metabolism; IMP biosynthesis via de novo pathway; 5-amino-1-(5-phospho-D-ribosyl)imidazole-4-carboxylate from 5-amino-1-(5-phospho-D-ribosyl)imidazole (carboxylase route): step 1/1. This is Phosphoribosylaminoimidazole carboxylase (ADE2) from Saccharomyces cerevisiae (strain ATCC 204508 / S288c) (Baker's yeast).